The sequence spans 272 residues: HMP-PP phosphatase (272 aa).

Asp-8 acts as the Nucleophile in catalysis. 3 residues coordinate Mg(2+): Asp-8, Asp-10, and Asp-212.

Belongs to the HAD-like hydrolase superfamily. Cof family. It depends on Mg(2+) as a cofactor.

It carries out the reaction 4-amino-2-methyl-5-(diphosphooxymethyl)pyrimidine + H2O = 4-amino-2-methyl-5-(phosphooxymethyl)pyrimidine + phosphate + H(+). Catalyzes the hydrolysis of 4-amino-2-methyl-5-hydroxymethylpyrimidine pyrophosphate (HMP-PP) to 4-amino-2-methyl-5-hydroxymethylpyrimidine phosphate (HMP-P). The sequence is that of HMP-PP phosphatase from Salmonella typhi.